Here is a 527-residue protein sequence, read N- to C-terminus: L-aspartate oxidase (527 aa).

Residues 17 to 20 (TGVA), lysine 40, 48 to 55 (ATHYAQGG), and aspartate 212 each bind FAD. Arginine 281 (proton donor/acceptor) is an active-site residue. Residues glutamate 364 and 380–381 (SL) contribute to the FAD site.

Belongs to the FAD-dependent oxidoreductase 2 family. NadB subfamily. FAD is required as a cofactor.

It localises to the cytoplasm. The enzyme catalyses L-aspartate + O2 = iminosuccinate + H2O2. It participates in cofactor biosynthesis; NAD(+) biosynthesis; iminoaspartate from L-aspartate (oxidase route): step 1/1. Functionally, catalyzes the oxidation of L-aspartate to iminoaspartate, the first step in the de novo biosynthesis of NAD(+). The sequence is that of L-aspartate oxidase (nadB) from Mycobacterium tuberculosis (strain CDC 1551 / Oshkosh).